Here is a 237-residue protein sequence, read N- to C-terminus: Cuticlin-like protein 19 (237 aa).

A signal peptide spans 1–20 (MVEYNRIFCVLVIFSTTIKC).

As to quaternary structure, interacts with vps-51 and vps-52. In terms of tissue distribution, expression detected in motor neurons.

The protein resides in the golgi apparatus. Its subcellular location is the trans-Golgi network. This chain is Cuticlin-like protein 19 (cutl-19), found in Caenorhabditis elegans.